Consider the following 332-residue polypeptide: Fructose-1,6-bisphosphatase class 1 (332 aa).

Mg(2+) is bound by residues Glu-89, Asp-110, Leu-112, and Asp-113. Substrate contacts are provided by residues 113–116 (DGSS), Asn-206, Tyr-239, 257–259 (YLY), and Lys-269. Glu-275 lines the Mg(2+) pocket.

The protein belongs to the FBPase class 1 family. Homotetramer. Mg(2+) is required as a cofactor.

The protein localises to the cytoplasm. It carries out the reaction beta-D-fructose 1,6-bisphosphate + H2O = beta-D-fructose 6-phosphate + phosphate. Its pathway is carbohydrate biosynthesis; gluconeogenesis. In Shigella sonnei (strain Ss046), this protein is Fructose-1,6-bisphosphatase class 1.